Here is a 1147-residue protein sequence, read N- to C-terminus: Nucleolar protein 8 (1147 aa).

The region spanning 8–89 (KRLFVGGLGQ…GTLQIQLAKE (82 aa)) is the RRM domain. A Glycyl lysine isopeptide (Lys-Gly) (interchain with G-Cter in SUMO2) cross-link involves residue Lys225. Ser300 and Ser306 each carry phosphoserine. Residue Lys316 forms a Glycyl lysine isopeptide (Lys-Gly) (interchain with G-Cter in SUMO2) linkage. Residue Tyr362 is modified to Phosphotyrosine. Residues Ser364 and Ser365 each carry the phosphoserine modification. At Thr367 the chain carries Phosphothreonine. Residues 379 to 401 (KVKNSAESSQPERTVSKKSSFQK) are disordered. The span at 383-400 (SAESSQPERTVSKKSSFQ) shows a compositional bias: polar residues. Residue Ser416 is modified to Phosphoserine. Disordered regions lie at residues 427–452 (KFVNPKFPPDSSGSDSEESEEDEEYK), 472–511 (AGSHRKFPGKDSETNGPQNDSHCKFDTTSKNPKTSGDLYN), 592–659 (MENG…PLKA), 686–741 (KALE…EDNQ), 766–888 (ANLD…NEDE), 932–963 (KHDHAIYERKQEDKEKESKATRKKKKEEAEKL), and 986–1017 (SNTDEKEEDVPRTEAGAREGTGKIRNAETLAC). Positions 441 to 450 (DSEESEEDEE) are enriched in acidic residues. Composition is skewed to polar residues over residues 592–610 (MENGSKCVNGSSSKLTSCQ) and 629–650 (TFENQNHKVMSSTSCDKGSTNP). Composition is skewed to basic and acidic residues over residues 700–714 (SLEKSSKVSPREDPQ) and 732–741 (AKDKQAEDNQ). A Phosphoserine modification is found at Ser704. Position 777 is a phosphothreonine (Thr777). Phosphoserine is present on residues Ser783 and Ser787. Positions 799–809 (CPEKELMKESV) are enriched in basic and acidic residues. Phosphoserine occurs at positions 819, 820, 825, 827, and 872. Positions 857–883 (SDERFRMDSRFLESDSEDEKKELNEDK) are enriched in basic and acidic residues. Coiled coils occupy residues 868–898 (LESDSEDEKKELNEDKVNEDELAAEKKKTLN) and 937–963 (IYERKQEDKEKESKATRKKKKEEAEKL). A compositionally biased stretch (basic and acidic residues) spans 994 to 1011 (DVPRTEAGAREGTGKIRN). Lys1038 is covalently cross-linked (Glycyl lysine isopeptide (Lys-Gly) (interchain with G-Cter in SUMO2)). Positions 1055–1086 (PNDPRFQDSSSEEEDIAEEADHSKPSPGEAVP) are disordered. Phosphoserine occurs at positions 1063, 1064, 1065, and 1080.

In terms of assembly, interacts with the GTP form of RRAGA, RRAGC and RRAGD. Interacts with NIP7. Interacts with DDX18; the interaction is RNA-dependent. Interacts with DDX47; the interaction is RNA-dependent. Phosphorylated.

It localises to the nucleus. It is found in the nucleolus. In terms of biological role, plays an essential role in the survival of diffuse-type gastric cancer cells. Acts as a nucleolar anchoring protein for DDX47. May be involved in regulation of gene expression at the post-transcriptional level or in ribosome biogenesis in cancer cells. The polypeptide is Nucleolar protein 8 (Mus musculus (Mouse)).